Reading from the N-terminus, the 366-residue chain is Histidinol-phosphate aminotransferase (366 aa).

Residue K228 is modified to N6-(pyridoxal phosphate)lysine.

Belongs to the class-II pyridoxal-phosphate-dependent aminotransferase family. Histidinol-phosphate aminotransferase subfamily. Homodimer. It depends on pyridoxal 5'-phosphate as a cofactor.

The enzyme catalyses L-histidinol phosphate + 2-oxoglutarate = 3-(imidazol-4-yl)-2-oxopropyl phosphate + L-glutamate. Its pathway is amino-acid biosynthesis; L-histidine biosynthesis; L-histidine from 5-phospho-alpha-D-ribose 1-diphosphate: step 7/9. This Corynebacterium diphtheriae (strain ATCC 700971 / NCTC 13129 / Biotype gravis) protein is Histidinol-phosphate aminotransferase.